The primary structure comprises 703 residues: Lethal(3)malignant brain tumor-like protein 2 (703 aa).

A disordered region spans residues 1–85 (MEKPRGTEEA…NNRSLDGSGS (85 aa)). A Phosphoserine modification is found at S13. Positions 15–25 (PMEEEEEDDLD) are enriched in acidic residues. A compositionally biased stretch (low complexity) spans 35–49 (SYNSSAGSESSSYLE). Over residues 50 to 60 (ESSEAENEDRE) the composition is skewed to acidic residues. Phosphoserine is present on S67. A compositionally biased stretch (polar residues) spans 73-82 (SSANNRSLDG). The segment at 81–116 (DGSGSEPAVCEMCGIVGTREAFFSKTKRFCSVSCSR) adopts an FCS-type zinc-finger fold. 4 residues coordinate Zn(2+): C90, C93, C110, and C114. MBT repeat units follow at residues 179–283 (FDWG…LVPP), 291–391 (TDWK…IKMS), 397–500 (MSHH…LTPP), and 508–604 (FAWE…LQPP). At S338 the chain carries Phosphoserine. A Glycyl lysine isopeptide (Lys-Gly) (interchain with G-Cter in SUMO2) cross-link involves residue K405. Positions 604-649 (PVSAEPNTPQKGKDTTKKKKKQFGKKRKRIPSAKTRPLRQGSKKPL) are disordered. Basic residues predominate over residues 619–634 (TKKKKKQFGKKRKRIP). Glycyl lysine isopeptide (Lys-Gly) (interchain with G-Cter in SUMO2) cross-links involve residues K647 and K673. The interval 675-703 (EHQDISSLDRSPSPQLPLPIESIKQERNN) is disordered. Residues S681, S685, and S687 each carry the phosphoserine modification. K698 is covalently cross-linked (Glycyl lysine isopeptide (Lys-Gly) (interchain with G-Cter in SUMO1); alternate). K698 is covalently cross-linked (Glycyl lysine isopeptide (Lys-Gly) (interchain with G-Cter in SUMO2); alternate).

In terms of assembly, part of the E2F6.com-1 complex in G0 phase composed of E2F6, MGA, MAX, TFDP1, CBX3, BAT8, EUHMTASE1, RING1, RNF2, MBLR, BAT8 and YAF2. In terms of processing, phosphorylated. Ubiquitous.

Its subcellular location is the nucleus. Putative Polycomb group (PcG) protein. PcG proteins maintain the transcriptionally repressive state of genes, probably via a modification of chromatin, rendering it heritably changed in its expressibility. Its association with a chromatin-remodeling complex suggests that it may contribute to prevent expression of genes that trigger the cell into mitosis. Binds to monomethylated and dimethylated 'Lys-20' on histone H4. Binds histone H3 peptides that are monomethylated or dimethylated on 'Lys-4', 'Lys-9' or 'Lys-27'. This chain is Lethal(3)malignant brain tumor-like protein 2 (L3mbtl2), found in Mus musculus (Mouse).